A 211-amino-acid chain; its full sequence is Large ribosomal subunit protein uL4 (211 aa).

Residues 44-94 (RSGNHATKTRSEVRGGGKKPWSQKGTGHARQGSTRAPHWVGGGTVHGPQKR) are disordered.

This sequence belongs to the universal ribosomal protein uL4 family. Part of the 50S ribosomal subunit.

Functionally, one of the primary rRNA binding proteins, this protein initially binds near the 5'-end of the 23S rRNA. It is important during the early stages of 50S assembly. It makes multiple contacts with different domains of the 23S rRNA in the assembled 50S subunit and ribosome. Its function is as follows. Forms part of the polypeptide exit tunnel. The chain is Large ribosomal subunit protein uL4 from Leptospira borgpetersenii serovar Hardjo-bovis (strain JB197).